The primary structure comprises 370 residues: Histidinol-phosphate aminotransferase (370 aa).

Lys-222 is subject to N6-(pyridoxal phosphate)lysine.

This sequence belongs to the class-II pyridoxal-phosphate-dependent aminotransferase family. Histidinol-phosphate aminotransferase subfamily. As to quaternary structure, homodimer. Pyridoxal 5'-phosphate is required as a cofactor.

It catalyses the reaction L-histidinol phosphate + 2-oxoglutarate = 3-(imidazol-4-yl)-2-oxopropyl phosphate + L-glutamate. Its pathway is amino-acid biosynthesis; L-histidine biosynthesis; L-histidine from 5-phospho-alpha-D-ribose 1-diphosphate: step 7/9. The chain is Histidinol-phosphate aminotransferase from Bacillus cytotoxicus (strain DSM 22905 / CIP 110041 / 391-98 / NVH 391-98).